Reading from the N-terminus, the 156-residue chain is Ribosomal RNA large subunit methyltransferase H (156 aa).

Residues leucine 73, glycine 104, and leucine 123–leucine 128 contribute to the S-adenosyl-L-methionine site.

It belongs to the RNA methyltransferase RlmH family. As to quaternary structure, homodimer.

The protein resides in the cytoplasm. The enzyme catalyses pseudouridine(1915) in 23S rRNA + S-adenosyl-L-methionine = N(3)-methylpseudouridine(1915) in 23S rRNA + S-adenosyl-L-homocysteine + H(+). Its function is as follows. Specifically methylates the pseudouridine at position 1915 (m3Psi1915) in 23S rRNA. The protein is Ribosomal RNA large subunit methyltransferase H of Aliivibrio fischeri (strain MJ11) (Vibrio fischeri).